The primary structure comprises 325 residues: Ribosomal RNA small subunit methyltransferase H (325 aa).

S-adenosyl-L-methionine is bound by residues Gly45–His47, Asp65, Tyr92, Asp113, and Gln120.

Belongs to the methyltransferase superfamily. RsmH family.

The protein resides in the cytoplasm. It catalyses the reaction cytidine(1402) in 16S rRNA + S-adenosyl-L-methionine = N(4)-methylcytidine(1402) in 16S rRNA + S-adenosyl-L-homocysteine + H(+). Its function is as follows. Specifically methylates the N4 position of cytidine in position 1402 (C1402) of 16S rRNA. The chain is Ribosomal RNA small subunit methyltransferase H from Oleidesulfovibrio alaskensis (strain ATCC BAA-1058 / DSM 17464 / G20) (Desulfovibrio alaskensis).